Consider the following 314-residue polypeptide: Ornithine carbamoyltransferase (314 aa).

Carbamoyl phosphate contacts are provided by residues 61-64 (STRT), Gln88, Arg112, and 139-142 (HPCQ). Residues Asn170, Asp234, and 238–239 (SM) contribute to the L-ornithine site. Residues 274–275 (CL) and Arg302 each bind carbamoyl phosphate.

Belongs to the aspartate/ornithine carbamoyltransferase superfamily. OTCase family.

It is found in the cytoplasm. The enzyme catalyses carbamoyl phosphate + L-ornithine = L-citrulline + phosphate + H(+). It participates in amino-acid biosynthesis; L-arginine biosynthesis; L-arginine from L-ornithine and carbamoyl phosphate: step 1/3. Reversibly catalyzes the transfer of the carbamoyl group from carbamoyl phosphate (CP) to the N(epsilon) atom of ornithine (ORN) to produce L-citrulline. The polypeptide is Ornithine carbamoyltransferase (Anoxybacillus flavithermus (strain DSM 21510 / WK1)).